The chain runs to 249 residues: Phosphatidylglycerol--prolipoprotein diacylglyceryl transferase (249 aa).

7 helical membrane passes run 11 to 31 (LKIY…VILL), 49 to 69 (AIVG…IVDI), 82 to 102 (LGNG…VYLY), 116 to 136 (LVVP…FLAG), 163 to 183 (LHPT…FLLW), 192 to 212 (GRVF…VEFL), and 223 to 243 (LSTS…VFNI). A 1,2-diacyl-sn-glycero-3-phospho-(1'-sn-glycerol) is bound at residue Arg-129.

Belongs to the Lgt family.

It localises to the cell membrane. The enzyme catalyses L-cysteinyl-[prolipoprotein] + a 1,2-diacyl-sn-glycero-3-phospho-(1'-sn-glycerol) = an S-1,2-diacyl-sn-glyceryl-L-cysteinyl-[prolipoprotein] + sn-glycerol 1-phosphate + H(+). It participates in protein modification; lipoprotein biosynthesis (diacylglyceryl transfer). Its function is as follows. Catalyzes the transfer of the diacylglyceryl group from phosphatidylglycerol to the sulfhydryl group of the N-terminal cysteine of a prolipoprotein, the first step in the formation of mature lipoproteins. This is Phosphatidylglycerol--prolipoprotein diacylglyceryl transferase from Clostridium tetani (strain Massachusetts / E88).